The sequence spans 116 residues: Non-specific lipid-transfer protein 8 (116 aa).

An N-terminal signal peptide occupies residues 1–24 (MNVLKCLAIISVLGIFFIPRYSES). 4 disulfide bridges follow: Cys28–Cys76, Cys38–Cys53, Cys54–Cys98, and Cys74–Cys112.

This sequence belongs to the plant LTP family.

Functionally, plant non-specific lipid-transfer proteins transfer phospholipids as well as galactolipids across membranes. May play a role in wax or cutin deposition in the cell walls of expanding epidermal cells and certain secretory tissues. This Arabidopsis thaliana (Mouse-ear cress) protein is Non-specific lipid-transfer protein 8 (LTP8).